The chain runs to 485 residues: Glutamate--tRNA ligase (485 aa).

Residues 11–21 (PSPTGLLHIGN) carry the 'HIGH' region motif. Residues 255–259 (KLSKR) carry the 'KMSKS' region motif. An ATP-binding site is contributed by Lys-258.

The protein belongs to the class-I aminoacyl-tRNA synthetase family. Glutamate--tRNA ligase type 1 subfamily. In terms of assembly, monomer.

Its subcellular location is the cytoplasm. It carries out the reaction tRNA(Glu) + L-glutamate + ATP = L-glutamyl-tRNA(Glu) + AMP + diphosphate. In terms of biological role, catalyzes the attachment of glutamate to tRNA(Glu) in a two-step reaction: glutamate is first activated by ATP to form Glu-AMP and then transferred to the acceptor end of tRNA(Glu). The sequence is that of Glutamate--tRNA ligase from Streptococcus sanguinis (strain SK36).